The primary structure comprises 1114 residues: Mediator of RNA polymerase II transcription subunit 14 (1114 aa).

3 disordered regions span residues Met-1–Leu-27, Ala-40–Glu-79, and His-120–Asn-141. Over residues Thr-126–Gly-140 the composition is skewed to polar residues.

This sequence belongs to the Mediator complex subunit 14 family. Component of the Mediator complex.

It localises to the nucleus. In terms of biological role, component of the Mediator complex, a coactivator involved in the regulated transcription of nearly all RNA polymerase II-dependent genes. Mediator functions as a bridge to convey information from gene-specific regulatory proteins to the basal RNA polymerase II transcription machinery. Mediator is recruited to promoters by direct interactions with regulatory proteins and serves as a scaffold for the assembly of a functional preinitiation complex with RNA polymerase II and the general transcription factors. This chain is Mediator of RNA polymerase II transcription subunit 14 (rgr1), found in Aspergillus niger (strain ATCC MYA-4892 / CBS 513.88 / FGSC A1513).